Reading from the N-terminus, the 371-residue chain is Flagellar P-ring protein (371 aa).

Residues 1 to 25 (MKMRACKWLLTLAVAFAATLSSAYA) form the signal peptide.

It belongs to the FlgI family. As to quaternary structure, the basal body constitutes a major portion of the flagellar organelle and consists of four rings (L,P,S, and M) mounted on a central rod.

It localises to the periplasm. The protein localises to the bacterial flagellum basal body. Assembles around the rod to form the L-ring and probably protects the motor/basal body from shearing forces during rotation. This Sinorhizobium medicae (strain WSM419) (Ensifer medicae) protein is Flagellar P-ring protein.